A 300-amino-acid chain; its full sequence is B1 kinase (300 aa).

In terms of domain architecture, Protein kinase spans 16–282 (WVVGPLIGKG…ITMVNSLTYF (267 aa)). Residues 22 to 30 (IGKGGFGSI) and Lys-45 each bind ATP. Catalysis depends on Asp-147, which acts as the Proton acceptor.

It belongs to the protein kinase superfamily. Ser/Thr protein kinase family. Poxviruses subfamily. In terms of assembly, interacts with host JIP1; this interaction increases the amount of MAPK bound to JIP1 and subsequently increases the activity of transcription factors, such as JUN, that respond to these complexes. Interacts with protein OPG198; this interaction inhibits the repressive activity of OPG198 pseudokinase on viral replication factory formation. Mg(2+) serves as cofactor. Autophosphorylated.

The protein localises to the virion. It localises to the host cytoplasm. It carries out the reaction L-seryl-[protein] + ATP = O-phospho-L-seryl-[protein] + ADP + H(+). It catalyses the reaction L-threonyl-[protein] + ATP = O-phospho-L-threonyl-[protein] + ADP + H(+). In terms of biological role, essential serine/threonine-protein kinase that plays different role in the viral life cycle. Phosphorylates the host small ribosomal protein RACK1 thereby customizing the ribosomes to a state optimal for viral mRNAs (which contain poly-A leaders) but not for host mRNAs. Facilitates viral DNA replication by inhibiting host BANF1, a cellular host defense responsive to foreign DNA. Phosphorylates host BANF1 on serine and threonine residues; this leads to BANF1 relocalization to the cytoplasm, loss of dimerization and impaired DNA binding activity. Indeed, BANF1 activity depends on its DNA-binding property which is blocked by VPK1-mediated phosphorylation. Required for viral intermediate genes expression, probably by inhibiting host BANF1. Modulates cellular responses via host JUN by two different mechanisms, either by direct phosphorylation or by modulation of upstream JIP1-MAPK complexes. Seems to participate in the accumulation/processing of late proteins and thus in virion maturation. In addition, inhibits B12 repressive activity on viral DNA replication via a phosphorylation-dependent mechanism. This is B1 kinase (OPG187) from Bos taurus (Bovine).